Reading from the N-terminus, the 1891-residue chain is Protein TIC 214 (1891 aa).

The next 6 helical transmembrane spans lie at 18–38 (IINS…FSIG), 64–84 (FITG…HLAL), 87–107 (PHTI…WNNH), 124–144 (LSIQ…HFIL), 172–192 (VGWL…LVWI), and 221–241 (IFSI…PSPI). Disordered stretches follow at residues 248 to 300 (EASK…EGWD), 788 to 807 (EEQT…DNKR), and 1580 to 1607 (KNRS…NLSP). Residues 256–268 (VESEEERDVEIET) show a composition bias toward acidic residues. Over residues 1582 to 1601 (RSQEAKEPPSQRERGSDIEN) the composition is skewed to basic and acidic residues.

The protein belongs to the TIC214 family. In terms of assembly, part of the Tic complex.

The protein resides in the plastid. Its subcellular location is the chloroplast inner membrane. Involved in protein precursor import into chloroplasts. May be part of an intermediate translocation complex acting as a protein-conducting channel at the inner envelope. In Solanum lycopersicum (Tomato), this protein is Protein TIC 214.